The sequence spans 245 residues: 1-(5-phosphoribosyl)-5-[(5-phosphoribosylamino)methylideneamino] imidazole-4-carboxamide isomerase (245 aa).

Asp-7 acts as the Proton acceptor in catalysis. The active-site Proton donor is the Asp-129.

It belongs to the HisA/HisF family.

It localises to the cytoplasm. It carries out the reaction 1-(5-phospho-beta-D-ribosyl)-5-[(5-phospho-beta-D-ribosylamino)methylideneamino]imidazole-4-carboxamide = 5-[(5-phospho-1-deoxy-D-ribulos-1-ylimino)methylamino]-1-(5-phospho-beta-D-ribosyl)imidazole-4-carboxamide. Its pathway is amino-acid biosynthesis; L-histidine biosynthesis; L-histidine from 5-phospho-alpha-D-ribose 1-diphosphate: step 4/9. The chain is 1-(5-phosphoribosyl)-5-[(5-phosphoribosylamino)methylideneamino] imidazole-4-carboxamide isomerase from Aliivibrio salmonicida (strain LFI1238) (Vibrio salmonicida (strain LFI1238)).